The sequence spans 180 residues: Protein GrpE (180 aa).

Residues 1–21 form a disordered region; it reads MSEEVKEQNLPEVEPVQEAAS.

It belongs to the GrpE family. As to quaternary structure, homodimer.

The protein resides in the cytoplasm. Its function is as follows. Participates actively in the response to hyperosmotic and heat shock by preventing the aggregation of stress-denatured proteins, in association with DnaK and GrpE. It is the nucleotide exchange factor for DnaK and may function as a thermosensor. Unfolded proteins bind initially to DnaJ; upon interaction with the DnaJ-bound protein, DnaK hydrolyzes its bound ATP, resulting in the formation of a stable complex. GrpE releases ADP from DnaK; ATP binding to DnaK triggers the release of the substrate protein, thus completing the reaction cycle. Several rounds of ATP-dependent interactions between DnaJ, DnaK and GrpE are required for fully efficient folding. This is Protein GrpE from Campylobacter concisus (strain 13826).